The primary structure comprises 196 residues: Cupin-domain-containing oxidoreductase srdB (196 aa).

One can recognise a Cupin type-2 domain in the interval 92-156 (DFAPGCKSNM…TSDEKPARML (65 aa)).

Belongs to the virC family.

Cupin-domain-containing oxidoreductase; part of the gene cluster that mediates the biosynthesis of sordarial, a salicylic aldehyde structurally related to the phytotoxin pyriculol. The most interesting aspect of this pathway is formation of an aromatic product from the highly reducing polyketide synthase srdA. SrdA synthesizes a reduced polyketide chain from one molecule of acetyl-CoA and five molecules of malonyl-CoA. The polyketide chain is then reductively released as an aldehyde. The oxidoreductases srdC, srdD and srdE then oxidize one of the hydroxy groups to facilitate the intramolecular aldol condensation, followed by dehydration to yield a salicylic aldehyde. This aldehyde can undergo facile reduction by endogenous reductases to yield the alcohol 1-hydroxy-2-hydroxymethyl-3-pent-1,3-dienylbenzene. The flavin-dependent srdI counteract against the propensity of the aldehydes to be reduced under physiological conditions and is responsible for reoxidizing 1-hydroxy-2-hydroxymethyl-3-pent-1,3-dienylbenzene back to the salicylic aldehyde. This salicylic aldehyde is then selectively epoxidized by the cupin-domain-containing oxidoreductase srdB to yield the epoxide, which can be hydrolyzed stereoselectively by the hydrolase srdG to give the final product sordarial. This Neurospora crassa (strain ATCC 24698 / 74-OR23-1A / CBS 708.71 / DSM 1257 / FGSC 987) protein is Cupin-domain-containing oxidoreductase srdB.